The chain runs to 274 residues: Large ribosomal subunit protein uL2 (274 aa).

The interval 223 to 274 (VAMNPVDHPHGGGEGKTSGGRHPVSPWGVPTKGYKTRSNKRTDKFIVRRRAK) is disordered.

It belongs to the universal ribosomal protein uL2 family. In terms of assembly, part of the 50S ribosomal subunit. Forms a bridge to the 30S subunit in the 70S ribosome.

Functionally, one of the primary rRNA binding proteins. Required for association of the 30S and 50S subunits to form the 70S ribosome, for tRNA binding and peptide bond formation. It has been suggested to have peptidyltransferase activity; this is somewhat controversial. Makes several contacts with the 16S rRNA in the 70S ribosome. This Colwellia psychrerythraea (strain 34H / ATCC BAA-681) (Vibrio psychroerythus) protein is Large ribosomal subunit protein uL2.